Consider the following 419-residue polypeptide: Serine hydroxymethyltransferase 1 (419 aa).

Residues L121 and 125–127 (GHL) each bind (6S)-5,6,7,8-tetrahydrofolate. K230 is modified (N6-(pyridoxal phosphate)lysine). Residue 356-358 (SPF) coordinates (6S)-5,6,7,8-tetrahydrofolate.

This sequence belongs to the SHMT family. Homodimer. Pyridoxal 5'-phosphate serves as cofactor.

The protein localises to the cytoplasm. It catalyses the reaction (6R)-5,10-methylene-5,6,7,8-tetrahydrofolate + glycine + H2O = (6S)-5,6,7,8-tetrahydrofolate + L-serine. It participates in one-carbon metabolism; tetrahydrofolate interconversion. It functions in the pathway amino-acid biosynthesis; glycine biosynthesis; glycine from L-serine: step 1/1. Catalyzes the reversible interconversion of serine and glycine with tetrahydrofolate (THF) serving as the one-carbon carrier. This reaction serves as the major source of one-carbon groups required for the biosynthesis of purines, thymidylate, methionine, and other important biomolecules. Also exhibits THF-independent aldolase activity toward beta-hydroxyamino acids, producing glycine and aldehydes, via a retro-aldol mechanism. This is Serine hydroxymethyltransferase 1 from Colwellia psychrerythraea (strain 34H / ATCC BAA-681) (Vibrio psychroerythus).